The chain runs to 66 residues: Large ribosomal subunit protein uL29 (66 aa).

Belongs to the universal ribosomal protein uL29 family.

This chain is Large ribosomal subunit protein uL29, found in Thermoplasma volcanium (strain ATCC 51530 / DSM 4299 / JCM 9571 / NBRC 15438 / GSS1).